A 450-amino-acid polypeptide reads, in one-letter code: UDP-N-acetylmuramoylalanine--D-glutamate ligase (450 aa).

119-125 (GSNGKTT) contacts ATP.

It belongs to the MurCDEF family.

It is found in the cytoplasm. It carries out the reaction UDP-N-acetyl-alpha-D-muramoyl-L-alanine + D-glutamate + ATP = UDP-N-acetyl-alpha-D-muramoyl-L-alanyl-D-glutamate + ADP + phosphate + H(+). The protein operates within cell wall biogenesis; peptidoglycan biosynthesis. Functionally, cell wall formation. Catalyzes the addition of glutamate to the nucleotide precursor UDP-N-acetylmuramoyl-L-alanine (UMA). This chain is UDP-N-acetylmuramoylalanine--D-glutamate ligase, found in Bacillus cereus (strain G9842).